The chain runs to 493 residues: Glycerol kinase (493 aa).

Threonine 11 serves as a coordination point for ADP. 3 residues coordinate ATP: threonine 11, threonine 12, and serine 13. Residue threonine 11 participates in sn-glycerol 3-phosphate binding. Residue arginine 15 participates in ADP binding. Sn-glycerol 3-phosphate-binding residues include arginine 80, glutamate 81, tyrosine 132, and aspartate 241. 5 residues coordinate glycerol: arginine 80, glutamate 81, tyrosine 132, aspartate 241, and glutamine 242. 2 residues coordinate ADP: threonine 263 and glycine 306. ATP is bound by residues threonine 263, glycine 306, glutamine 310, and glycine 408. Residue glycine 408 participates in ADP binding.

It belongs to the FGGY kinase family.

It catalyses the reaction glycerol + ATP = sn-glycerol 3-phosphate + ADP + H(+). The protein operates within polyol metabolism; glycerol degradation via glycerol kinase pathway; sn-glycerol 3-phosphate from glycerol: step 1/1. With respect to regulation, inhibited by fructose 1,6-bisphosphate (FBP). In terms of biological role, key enzyme in the regulation of glycerol uptake and metabolism. Catalyzes the phosphorylation of glycerol to yield sn-glycerol 3-phosphate. The chain is Glycerol kinase from Cereibacter sphaeroides (strain ATCC 17023 / DSM 158 / JCM 6121 / CCUG 31486 / LMG 2827 / NBRC 12203 / NCIMB 8253 / ATH 2.4.1.) (Rhodobacter sphaeroides).